Consider the following 221-residue polypeptide: Probable GTP-binding protein EngB (221 aa).

Residues 23 to 211 form the EngB-type G domain; it reads PLREVAFAGR…DNLIIKWLFE (189 aa). Mg(2+) contacts are provided by Ser38 and Thr60.

The protein belongs to the TRAFAC class TrmE-Era-EngA-EngB-Septin-like GTPase superfamily. EngB GTPase family. The cofactor is Mg(2+).

In terms of biological role, necessary for normal cell division and for the maintenance of normal septation. The sequence is that of Probable GTP-binding protein EngB from Polynucleobacter asymbioticus (strain DSM 18221 / CIP 109841 / QLW-P1DMWA-1) (Polynucleobacter necessarius subsp. asymbioticus).